A 253-amino-acid chain; its full sequence is Phosphate import ATP-binding protein PstB (253 aa).

Residues 1 to 249 (MKLMDVRVSG…PRHELTKKFL (249 aa)) form the ABC transporter domain. 38–45 (GPSGSGKS) is a binding site for ATP.

Belongs to the ABC transporter superfamily. Phosphate importer (TC 3.A.1.7) family. In terms of assembly, the complex is composed of two ATP-binding proteins (PstB), two transmembrane proteins (PstC and PstA) and a solute-binding protein (PstS).

It localises to the cell membrane. The enzyme catalyses phosphate(out) + ATP + H2O = ADP + 2 phosphate(in) + H(+). Functionally, part of the ABC transporter complex PstSACB involved in phosphate import. Responsible for energy coupling to the transport system. This chain is Phosphate import ATP-binding protein PstB, found in Aeropyrum pernix (strain ATCC 700893 / DSM 11879 / JCM 9820 / NBRC 100138 / K1).